A 346-amino-acid polypeptide reads, in one-letter code: MTASTNTLTITRPDDWHLHVRDGEAMRSVVPHTAAQFARAIIMPNLKPPVTTAEQALEYKQRILSAVPEGMAFEPLMTLYLTDNLPPEEIVRAKAAGVVACKLYPAGATTNSDHGVTDLRKIYPTLEAMQREGLLLLVHGEVTSSDIDLFDREAAFIDQHLIPLRRDFPELKIVFEHITTREAAQYVTEADRFVGATITPQHLLFNRNAIFTGGIRPHYYCLPVLKRETHRLALVEAATSGLPKFFLGTDSAPHAAHLKEHATGCAGCYSAHAAIEMYAEAFDNAGALDKLEAFASFNGPDFYSLPRNTGKITLVRESWTPPDSFAFGEAQLKPLRSGEALPWKLV.

Positions 17 and 19 each coordinate Zn(2+). Substrate-binding positions include 19–21 (HVR) and Asn45. Zn(2+) contacts are provided by Lys102, His139, and His177. Lys102 is modified (N6-carboxylysine). His139 contacts substrate. Leu222 is a substrate binding site. Residue Asp250 coordinates Zn(2+). Residue Asp250 is part of the active site. 2 residues coordinate substrate: His254 and Ala266.

This sequence belongs to the metallo-dependent hydrolases superfamily. DHOase family. Class II DHOase subfamily. As to quaternary structure, homodimer. It depends on Zn(2+) as a cofactor.

It carries out the reaction (S)-dihydroorotate + H2O = N-carbamoyl-L-aspartate + H(+). It participates in pyrimidine metabolism; UMP biosynthesis via de novo pathway; (S)-dihydroorotate from bicarbonate: step 3/3. Its function is as follows. Catalyzes the reversible cyclization of carbamoyl aspartate to dihydroorotate. This is Dihydroorotase from Delftia acidovorans (strain DSM 14801 / SPH-1).